The following is a 253-amino-acid chain: Sec-independent protein translocase protein TatC (253 aa).

6 helical membrane-spanning segments follow: residues 18–38 (VSVG…KSIF), 69–89 (AIVI…APGL), 96–116 (VILP…AFSY), 151–171 (LILG…LAKV), 187–207 (IVVI…SQIF), and 208–228 (MALP…MVNP). A disordered region spans residues 231–253 (KDNENNNENNNENNTKENTKSES). Over residues 244–253 (NTKENTKSES) the composition is skewed to basic and acidic residues.

It belongs to the TatC family. The Tat system comprises two distinct complexes: a TatABC complex, containing multiple copies of TatA, TatB and TatC subunits, and a separate TatA complex, containing only TatA subunits. Substrates initially bind to the TatABC complex, which probably triggers association of the separate TatA complex to form the active translocon.

It is found in the cell inner membrane. In terms of biological role, part of the twin-arginine translocation (Tat) system that transports large folded proteins containing a characteristic twin-arginine motif in their signal peptide across membranes. Together with TatB, TatC is part of a receptor directly interacting with Tat signal peptides. The protein is Sec-independent protein translocase protein TatC of Helicobacter pylori (strain ATCC 700392 / 26695) (Campylobacter pylori).